The primary structure comprises 377 residues: uncharacterized protein (377 aa).

The next 4 helical transmembrane spans lie at 26 to 46 (TFQN…VVAI), 67 to 87 (TVGS…WVII), 108 to 128 (FLTF…ISLT), and 135 to 155 (IDYG…ALYI).

It is found in the cell membrane. This is an uncharacterized protein from Methanocaldococcus jannaschii (strain ATCC 43067 / DSM 2661 / JAL-1 / JCM 10045 / NBRC 100440) (Methanococcus jannaschii).